The primary structure comprises 58 residues: Apelin receptor early endogenous ligand (58 aa).

Positions 1–22 (MRFFHPLYLLLLLLTVLVLISA) are cleaved as a signal peptide.

The protein belongs to the Elabela/Toddler family. As to quaternary structure, interacts with aplnra and aplnrb. As to expression, expressed ubiquitously during late blastula and gastrula stages and becomes restricted to the lateral mesoderm, endoderm, and anterior and posterior notochord after gastrulation.

Its subcellular location is the secreted. It localises to the extracellular space. In terms of biological role, peptide hormone that functions as endogenous ligand for the G-protein-coupled apelin receptor (aplnra and/or aplnrb), that plays a role in the regulation of normal cardiovascular function and fluid homeostasis. Functions as a balanced agonist activating both G(i) protein pathway and beta-arrestin pathway of APLNR. Downstream G proteins activation, apelin can inhibit cAMP production and activate key intracellular effectors such as ERKs. On the other hand, APLNR activation induces beta-arrestin recruitment to the membrane leading to desensitization and internalization of the receptor. Required for mesendodermal differentiation, blood vessels formation and heart morphogenesis during early development and for adult cardiovascular homeostasis. Acts as a motogen by promoting mesendodermal cell migration during gastrulation by binding and activating the apelin receptor. Acts as an early embryonic regulator of cellular movement with a role in migration and development of cardiac progenitor cells. May act as a chemoattractant for the activation of angioblast migration toward the embryonic midline, i.e. the position of the future vessel formation, during vasculogenesis. Positively regulates sinus venosus (SV)-derived endothelial cells migration into the developing heart to promote coronary blood vessel sprouting. Involved in cardioprotective functions during heart failure. Mediates myocardial contractility in an ERK1/2-dependent manner. This Danio rerio (Zebrafish) protein is Apelin receptor early endogenous ligand.